Consider the following 450-residue polypeptide: 3-phosphoshikimate 1-carboxyvinyltransferase (450 aa).

Positions 28, 29, and 33 each coordinate 3-phosphoshikimate. Lysine 28 lines the phosphoenolpyruvate pocket. The phosphoenolpyruvate site is built by glycine 100 and arginine 128. Positions 173, 175, 326, and 353 each coordinate 3-phosphoshikimate. Glutamine 175 contacts phosphoenolpyruvate. Aspartate 326 acts as the Proton acceptor in catalysis. Arginine 357 and arginine 402 together coordinate phosphoenolpyruvate.

The protein belongs to the EPSP synthase family. In terms of assembly, monomer.

It is found in the cytoplasm. The catalysed reaction is 3-phosphoshikimate + phosphoenolpyruvate = 5-O-(1-carboxyvinyl)-3-phosphoshikimate + phosphate. The protein operates within metabolic intermediate biosynthesis; chorismate biosynthesis; chorismate from D-erythrose 4-phosphate and phosphoenolpyruvate: step 6/7. Functionally, catalyzes the transfer of the enolpyruvyl moiety of phosphoenolpyruvate (PEP) to the 5-hydroxyl of shikimate-3-phosphate (S3P) to produce enolpyruvyl shikimate-3-phosphate and inorganic phosphate. This is 3-phosphoshikimate 1-carboxyvinyltransferase from Brucella melitensis biotype 1 (strain ATCC 23456 / CCUG 17765 / NCTC 10094 / 16M).